Here is a 183-residue protein sequence, read N- to C-terminus: ATP-dependent protease subunit HslV (183 aa).

The active site involves T2. Na(+) contacts are provided by A157, C160, and T163.

The protein belongs to the peptidase T1B family. HslV subfamily. A double ring-shaped homohexamer of HslV is capped on each side by a ring-shaped HslU homohexamer. The assembly of the HslU/HslV complex is dependent on binding of ATP.

It localises to the cytoplasm. The catalysed reaction is ATP-dependent cleavage of peptide bonds with broad specificity.. With respect to regulation, allosterically activated by HslU binding. Protease subunit of a proteasome-like degradation complex believed to be a general protein degrading machinery. The sequence is that of ATP-dependent protease subunit HslV from Marinomonas sp. (strain MWYL1).